Here is a 146-residue protein sequence, read N- to C-terminus: NADH-quinone oxidoreductase subunit A (146 aa).

3 consecutive transmembrane segments (helical) span residues 14 to 34 (FALF…GGFL), 68 to 88 (LVAM…AWAV), and 96 to 116 (IGFI…IYLV).

Belongs to the complex I subunit 3 family. NDH-1 is composed of 13 different subunits. Subunits NuoA, H, J, K, L, M, N constitute the membrane sector of the complex.

The protein resides in the cell inner membrane. It catalyses the reaction a quinone + NADH + 5 H(+)(in) = a quinol + NAD(+) + 4 H(+)(out). NDH-1 shuttles electrons from NADH, via FMN and iron-sulfur (Fe-S) centers, to quinones in the respiratory chain. The immediate electron acceptor for the enzyme in this species is believed to be ubiquinone. Couples the redox reaction to proton translocation (for every two electrons transferred, four hydrogen ions are translocated across the cytoplasmic membrane), and thus conserves the redox energy in a proton gradient. The sequence is that of NADH-quinone oxidoreductase subunit A from Pectobacterium atrosepticum (strain SCRI 1043 / ATCC BAA-672) (Erwinia carotovora subsp. atroseptica).